The following is a 156-amino-acid chain: Ribosomal RNA large subunit methyltransferase H (156 aa).

Residues L73, G104, and I123–L128 each bind S-adenosyl-L-methionine.

This sequence belongs to the RNA methyltransferase RlmH family. Homodimer.

It localises to the cytoplasm. The catalysed reaction is pseudouridine(1915) in 23S rRNA + S-adenosyl-L-methionine = N(3)-methylpseudouridine(1915) in 23S rRNA + S-adenosyl-L-homocysteine + H(+). Specifically methylates the pseudouridine at position 1915 (m3Psi1915) in 23S rRNA. This Burkholderia cenocepacia (strain ATCC BAA-245 / DSM 16553 / LMG 16656 / NCTC 13227 / J2315 / CF5610) (Burkholderia cepacia (strain J2315)) protein is Ribosomal RNA large subunit methyltransferase H.